We begin with the raw amino-acid sequence, 277 residues long: Co-chaperone protein DjlA (277 aa).

The Periplasmic segment spans residues 1 to 6 (MRYWGK). The helical transmembrane segment at 7 to 31 (LLGLVLGVMYAPGVVGALLGLLVGH) threads the bilayer. The Cytoplasmic portion of the chain corresponds to 32–277 (MVDRALGAKR…DLIKREKGFK (246 aa)). Residues 211–277 (DACKVLGVNS…DLIKREKGFK (67 aa)) enclose the J domain.

As to quaternary structure, homodimer.

Its subcellular location is the cell inner membrane. Functionally, regulatory DnaK co-chaperone. Direct interaction between DnaK and DjlA is needed for the induction of the wcaABCDE operon, involved in the synthesis of a colanic acid polysaccharide capsule, possibly through activation of the RcsB/RcsC phosphotransfer signaling pathway. The colanic acid capsule may help the bacterium survive conditions outside the host. The chain is Co-chaperone protein DjlA from Yersinia pseudotuberculosis serotype I (strain IP32953).